We begin with the raw amino-acid sequence, 156 residues long: Organelle RRM domain-containing protein 2, mitochondrial (156 aa).

The transit peptide at 1–28 (MAMAMRLPAISRAVTEVASAPVGLRRLF) directs the protein to the mitochondrion. The region spanning 56–134 (TNLFVSGLSK…WVIFAEYARP (79 aa)) is the RRM domain. Residue serine 64 is modified to Phosphoserine. The segment covering 137–148 (QSQSYQPQNNMS) has biased composition (polar residues). Positions 137–156 (QSQSYQPQNNMSRPPYYGNR) are disordered.

As to quaternary structure, interacts with RBG3/ORRM3. Binds to RBG2/ORRM5.

The protein resides in the mitochondrion. Its function is as follows. Involved in C-to-U editing of mitochondrial RNA. Functions as minor mitochondrial editing factor. Controls 6 percent of the mitochondrial editing sites. The sequence is that of Organelle RRM domain-containing protein 2, mitochondrial from Arabidopsis thaliana (Mouse-ear cress).